The chain runs to 152 residues: uncharacterized protein (152 aa).

3 consecutive transmembrane segments (helical) span residues isoleucine 15 to isoleucine 35, leucine 43 to threonine 63, and threonine 117 to isoleucine 137.

This sequence to M.jannaschii MJ0129 and MJ0587.

It localises to the cell membrane. This is an uncharacterized protein from Methanocaldococcus jannaschii (strain ATCC 43067 / DSM 2661 / JAL-1 / JCM 10045 / NBRC 100440) (Methanococcus jannaschii).